Consider the following 410-residue polypeptide: Translation initiation factor 2 subunit gamma (410 aa).

The region spanning 6–203 (QSEVNIGMVG…AIQDFIPTPE (198 aa)) is the tr-type G domain. The interval 15-22 (GHVDHGKT) is G1. Mg(2+) is bound by residues Asp18, Thr22, Gly43, and Ser45. 18–23 (DHGKTS) is a GTP binding site. Residues 43–47 (GISIR) form a G2 region. 4 residues coordinate Zn(2+): Cys58, Cys61, Cys73, and Cys76. The interval 90-93 (DAPG) is G3. Residues 146-149 (NKID) and 181-183 (SAH) contribute to the GTP site. The tract at residues 146 to 149 (NKID) is G4. Residues 181-183 (SAH) form a G5 region.

The protein belongs to the TRAFAC class translation factor GTPase superfamily. Classic translation factor GTPase family. EIF2G subfamily. In terms of assembly, heterotrimer composed of an alpha, a beta and a gamma chain. Mg(2+) is required as a cofactor.

The catalysed reaction is GTP + H2O = GDP + phosphate + H(+). In terms of biological role, eIF-2 functions in the early steps of protein synthesis by forming a ternary complex with GTP and initiator tRNA. The polypeptide is Translation initiation factor 2 subunit gamma (Methanococcus maripaludis (strain DSM 14266 / JCM 13030 / NBRC 101832 / S2 / LL)).